The chain runs to 150 residues: Non-specific lipid transfer protein GPI-anchored 7 (150 aa).

The signal sequence occupies residues methionine 1–alanine 25. 4 cysteine pairs are disulfide-bonded: cysteine 29–cysteine 66, cysteine 36–cysteine 50, cysteine 51–cysteine 92, and cysteine 64–cysteine 101. Residues asparagine 41, asparagine 79, and asparagine 93 are each glycosylated (N-linked (GlcNAc...) asparagine). A disordered region spans residues alanine 103 to aspartate 125. A lipid anchor (GPI-anchor amidated aspartate) is attached at aspartate 125. A propeptide spans alanine 126 to phenylalanine 150 (removed in mature form).

It belongs to the plant LTP family. As to expression, up-regulated in the epidermis of stems.

The protein resides in the cell membrane. Probable lipid transfer protein. This Arabidopsis thaliana (Mouse-ear cress) protein is Non-specific lipid transfer protein GPI-anchored 7.